A 395-amino-acid polypeptide reads, in one-letter code: Pyruvate synthase subunit PorA (395 aa).

Heterotetramer of one alpha, one beta, one delta and one gamma chain.

The enzyme catalyses 2 oxidized [2Fe-2S]-[ferredoxin] + pyruvate + CoA = 2 reduced [2Fe-2S]-[ferredoxin] + acetyl-CoA + CO2 + H(+). The sequence is that of Pyruvate synthase subunit PorA (porA) from Pyrococcus abyssi (strain GE5 / Orsay).